Consider the following 181-residue polypeptide: Cell division protein SepF (181 aa).

Residues 18–27 (EDYLDDDDYD) show a composition bias toward acidic residues. The disordered stretch occupies residues 18–42 (EDYLDDDDYDDGRAVGHDDRRAMHE). Positions 28-42 (DGRAVGHDDRRAMHE) are enriched in basic and acidic residues.

This sequence belongs to the SepF family. As to quaternary structure, homodimer. Interacts with FtsZ.

The protein localises to the cytoplasm. Functionally, cell division protein that is part of the divisome complex and is recruited early to the Z-ring. Probably stimulates Z-ring formation, perhaps through the cross-linking of FtsZ protofilaments. Its function overlaps with FtsA. In Frankia alni (strain DSM 45986 / CECT 9034 / ACN14a), this protein is Cell division protein SepF.